We begin with the raw amino-acid sequence, 147 residues long: SsrA-binding protein (147 aa).

Belongs to the SmpB family.

The protein resides in the cytoplasm. In terms of biological role, required for rescue of stalled ribosomes mediated by trans-translation. Binds to transfer-messenger RNA (tmRNA), required for stable association of tmRNA with ribosomes. tmRNA and SmpB together mimic tRNA shape, replacing the anticodon stem-loop with SmpB. tmRNA is encoded by the ssrA gene; the 2 termini fold to resemble tRNA(Ala) and it encodes a 'tag peptide', a short internal open reading frame. During trans-translation Ala-aminoacylated tmRNA acts like a tRNA, entering the A-site of stalled ribosomes, displacing the stalled mRNA. The ribosome then switches to translate the ORF on the tmRNA; the nascent peptide is terminated with the 'tag peptide' encoded by the tmRNA and targeted for degradation. The ribosome is freed to recommence translation, which seems to be the essential function of trans-translation. This chain is SsrA-binding protein, found in Thermosipho melanesiensis (strain DSM 12029 / CIP 104789 / BI429).